The chain runs to 784 residues: DNA ligase (784 aa).

Residues 35-39 (DAEYD), 84-85 (SL), and glutamate 117 contribute to the NAD(+) site. Lysine 119 functions as the N6-AMP-lysine intermediate in the catalytic mechanism. NAD(+) is bound by residues arginine 140, glutamate 177, lysine 294, and lysine 318. Positions 412, 415, 442, and 448 each coordinate Zn(2+). The BRCT domain occupies 703-784 (AEGLPLAGQT…FLALLRQLES (82 aa)).

This sequence belongs to the NAD-dependent DNA ligase family. LigA subfamily. It depends on Mg(2+) as a cofactor. Requires Mn(2+) as cofactor.

The enzyme catalyses NAD(+) + (deoxyribonucleotide)n-3'-hydroxyl + 5'-phospho-(deoxyribonucleotide)m = (deoxyribonucleotide)n+m + AMP + beta-nicotinamide D-nucleotide.. Its function is as follows. DNA ligase that catalyzes the formation of phosphodiester linkages between 5'-phosphoryl and 3'-hydroxyl groups in double-stranded DNA using NAD as a coenzyme and as the energy source for the reaction. It is essential for DNA replication and repair of damaged DNA. The chain is DNA ligase from Azotobacter vinelandii (strain DJ / ATCC BAA-1303).